The sequence spans 439 residues: Elongation factor 1-alpha 2 (439 aa).

A tr-type G domain is found at 6 to 229 (KDHLNLVVIG…DEFKVPKRPI (224 aa)). Positions 15 to 22 (GHVDSGKS) are G1. GTP is bound at residue 15-22 (GHVDSGKS). Residues 71 to 75 (GITIN) are G2. The interval 92–95 (DAPG) is G3. GTP contacts are provided by residues 92–96 (DAPGH) and 154–157 (NKMD). The tract at residues 154 to 157 (NKMD) is G4. Residues 193-195 (SGF) form a G5 region.

It belongs to the TRAFAC class translation factor GTPase superfamily. Classic translation factor GTPase family. EF-Tu/EF-1A subfamily.

It localises to the cytoplasm. In terms of biological role, this protein promotes the GTP-dependent binding of aminoacyl-tRNA to the A-site of ribosomes during protein biosynthesis. This is Elongation factor 1-alpha 2 (EFA2) from Euplotes crassus.